The sequence spans 90 residues: Small ribosomal subunit protein uS19 (90 aa).

This sequence belongs to the universal ribosomal protein uS19 family.

Protein S19 forms a complex with S13 that binds strongly to the 16S ribosomal RNA. The protein is Small ribosomal subunit protein uS19 of Mesomycoplasma hyopneumoniae (strain 232) (Mycoplasma hyopneumoniae).